The following is a 238-amino-acid chain: Ankyrin repeat domain-containing protein 49 (238 aa).

Positions T38–K57 are disordered. S48 bears the Phosphoserine mark. Residues S48–K57 show a composition bias toward acidic residues. ANK repeat units lie at residues D72–E105, D106–A135, D139–A168, and G172–N205.

In terms of tissue distribution, expressed in spermatogonia, spermatocytes and round spermatids.

Its subcellular location is the nucleus. May have a role in spermatogenesis where it promotes autophagy in response to serum starvation, via the NF-kappaB pathway. This is Ankyrin repeat domain-containing protein 49 (Ankrd49) from Mus musculus (Mouse).